The following is a 136-amino-acid chain: UPF0216 protein PYRAB16100 (136 aa).

Belongs to the UPF0216 family.

The chain is UPF0216 protein PYRAB16100 from Pyrococcus abyssi (strain GE5 / Orsay).